Here is a 234-residue protein sequence, read N- to C-terminus: Preprocaerulein type-4 (234 aa).

A signal peptide spans 1-26; it reads MFKGILLCVLFAVLSANPLSQPEGFA. Positions 27–73 are excised as a propeptide; sequence DEEERDVRGLASLLGKALKAALKIGANALGGSPQQREANDERRFADG. Tyr77 is modified (sulfotyrosine). At Phe83 the chain carries Phenylalanine amide. A propeptide spanning residues 87-137 is cleaved from the precursor; the sequence is DDEDDVNERDVRGFGSFLGKALKAGLKIGTHFLGGAPQQREANDERRFADG. Tyr141 is subject to Sulfotyrosine. Phe147 carries the post-translational modification Phenylalanine amide. Positions 151 to 152 are excised as a propeptide; sequence DG. Residue Tyr156 is modified to Sulfotyrosine. Phe162 bears the Phenylalanine amide mark. Residues 166–216 constitute a propeptide that is removed on maturation; it reads DDEDDVHERDVRGFGSFLGKALKAALKIGANALGGSPQQREANDERRFADG. The interval 198–234 is disordered; the sequence is LGGSPQQREANDERRFADGQQDYTGWMDFGRRNGEDD. The residue at position 220 (Tyr220) is a Sulfotyrosine. A Phenylalanine amide modification is found at Phe226. A propeptide spanning residues 230-234 is cleaved from the precursor; the sequence is NGEDD.

The protein belongs to the gastrin/cholecystokinin family. As to expression, expressed by the skin glands.

It localises to the secreted. In terms of biological role, the pharmacological activities of caerulein are quite similar to the physiological activities of gastrin and related peptides. In Xenopus borealis (Kenyan clawed frog), this protein is Preprocaerulein type-4.